Reading from the N-terminus, the 128-residue chain is Probable 4-amino-4-deoxy-L-arabinose-phosphoundecaprenol flippase subunit ArnF (128 aa).

Over 1 to 5 (MKGYG) the chain is Cytoplasmic. A helical membrane pass occupies residues 6–26 (WGIGSVVLVTVAQLILKWGMM). At 27-47 (NTPLMSLADINGQFVFNHLPQ) the chain is on the periplasmic side. The chain crosses the membrane as a helical span at residues 48-68 (FIAVICGLAGYALSMLCWFFA). Over 69 to 77 (LRYLPLNRA) the chain is Cytoplasmic. A helical membrane pass occupies residues 78-98 (YPLLSLSYALVYLGAVSLPWF). Topologically, residues 99 to 101 (SES) are periplasmic. Residues 102–122 (ATLLKTLGAGFILLGIWLINT) form a helical membrane-spanning segment. Residues 123 to 128 (KPIAKD) are Cytoplasmic-facing.

This sequence belongs to the ArnF family. As to quaternary structure, heterodimer of ArnE and ArnF.

Its subcellular location is the cell inner membrane. Its pathway is bacterial outer membrane biogenesis; lipopolysaccharide biosynthesis. Functionally, translocates 4-amino-4-deoxy-L-arabinose-phosphoundecaprenol (alpha-L-Ara4N-phosphoundecaprenol) from the cytoplasmic to the periplasmic side of the inner membrane. The protein is Probable 4-amino-4-deoxy-L-arabinose-phosphoundecaprenol flippase subunit ArnF of Yersinia enterocolitica serotype O:8 / biotype 1B (strain NCTC 13174 / 8081).